A 107-amino-acid polypeptide reads, in one-letter code: Essential MCU regulator, mitochondrial (107 aa).

A mitochondrion-targeting transit peptide spans 1–47; sequence MASGAARWLALVRVGSGASRSWLSLRKGGDVSAGRSCSGQSLVPTRS. Over 48 to 65 the chain is Mitochondrial matrix; the sequence is VIVTRSGAILPKPVKMSF. Residues 66 to 85 traverse the membrane as a helical segment; sequence GLLRVFSIVIPFLYVGTLIS. The GXXXX[G/A/S] signature appears at 81-85; the sequence is GTLIS. The Mitochondrial intermembrane portion of the chain corresponds to 86–107; the sequence is KNFAALLEEHDIFVPEDDDDDD.

Belongs to the SMDT1/EMRE family. As to quaternary structure, component of the uniplex complex, composed of MCU, EMRE/SMDT1, MICU1 and MICU2 (or MICU3) in a 4:4:1:1 stoichiometry. The number of EMRE/SMDT1 molecules is hovewer variable, ranging from 1 to 4 copies per uniplex complex, leading to uniplex complexes with distinct gatekeeping profiles. Interacts (via its C-terminal poly-Asp tail) with MCUR1; the interaction is direct. Unprocessed form interacts (via transit peptide) with MAIP1. Undergoes proteolytic degradation in neurons: degraded by AFG3L2 and SPG7 before SMDT1/EMRE assembly with the uniporter complex, limiting the availability of SMDT1/EMRE for MCU assembly and promoting efficient assembly of gatekeeper subunits with MCU.

It localises to the mitochondrion inner membrane. Functionally, essential regulatory subunit of the mitochondrial calcium uniporter complex (uniplex), a complex that mediates calcium uptake into mitochondria. Required to bridge the calcium-sensing proteins MICU1 with the calcium-conducting subunit MCU. Acts by mediating activation of MCU and retention of MICU1 to the MCU pore, in order to ensure tight regulation of the uniplex complex and appropriate responses to intracellular calcium signaling. The polypeptide is Essential MCU regulator, mitochondrial (Bos taurus (Bovine)).